Consider the following 643-residue polypeptide: Phosphomethylpyrimidine synthase (643 aa).

Residues Asn-248, Met-277, Tyr-306, His-342, 362–364, 403–406, and Glu-442 each bind substrate; these read SRG and DGLR. His-446 contacts Zn(2+). Tyr-469 serves as a coordination point for substrate. His-510 is a Zn(2+) binding site. Positions 590, 593, and 598 each coordinate [4Fe-4S] cluster.

This sequence belongs to the ThiC family. As to quaternary structure, homodimer. Requires [4Fe-4S] cluster as cofactor.

It catalyses the reaction 5-amino-1-(5-phospho-beta-D-ribosyl)imidazole + S-adenosyl-L-methionine = 4-amino-2-methyl-5-(phosphooxymethyl)pyrimidine + CO + 5'-deoxyadenosine + formate + L-methionine + 3 H(+). The protein operates within cofactor biosynthesis; thiamine diphosphate biosynthesis. In terms of biological role, catalyzes the synthesis of the hydroxymethylpyrimidine phosphate (HMP-P) moiety of thiamine from aminoimidazole ribotide (AIR) in a radical S-adenosyl-L-methionine (SAM)-dependent reaction. This Burkholderia cenocepacia (strain HI2424) protein is Phosphomethylpyrimidine synthase.